The following is a 303-amino-acid chain: Dihydroorotate dehydrogenase B (NAD(+)), catalytic subunit (303 aa).

FMN-binding positions include Ser-23 and 47–48; that span reads KS. Residues Lys-47, 71 to 75, and Asn-125 each bind substrate; that span reads NAMGL. Position 125 (Asn-125) interacts with FMN. The active-site Nucleophile is Cys-128. Lys-163 and Ile-189 together coordinate FMN. 190-191 contributes to the substrate binding site; it reads NT. FMN is bound by residues Gly-215, 241–242, and 263–264; these read GG and GT.

This sequence belongs to the dihydroorotate dehydrogenase family. Type 1 subfamily. Heterotetramer of 2 PyrK and 2 PyrD type B subunits. FMN serves as cofactor.

The protein resides in the cytoplasm. The enzyme catalyses (S)-dihydroorotate + NAD(+) = orotate + NADH + H(+). It participates in pyrimidine metabolism; UMP biosynthesis via de novo pathway; orotate from (S)-dihydroorotate (NAD(+) route): step 1/1. In terms of biological role, catalyzes the conversion of dihydroorotate to orotate with NAD(+) as electron acceptor. This Pyrococcus horikoshii (strain ATCC 700860 / DSM 12428 / JCM 9974 / NBRC 100139 / OT-3) protein is Dihydroorotate dehydrogenase B (NAD(+)), catalytic subunit (pyrD).